A 375-amino-acid polypeptide reads, in one-letter code: MKYELIKKQGRARRGQLQFDRGTVETPAFMPVGTYGTVKGMTPEEVKDTGAEILLGNTFHLWLRPGQEIMKLHGDLHDFMNWKGPILTDSGGFQVFSLGKTRKITEEGVHFRSPVNGDKIFMDAEKSMQIQYDLGSDVVMIFDECTPYPATHDEARISMERSIRWADRSRNEFDRQENPNALFGIVQGGVYEDLRDVSVEALTKIGFDGYAVGGLAVGEPKEDMHRILEHTCPLLPEDKPRYLMGVGKPEDLVEGVRRGIDMFDCVMPTRNARNGHLFVTGGIVKIRNAKHKVDTTPLDPECDCYTCQNYSKSYLHHLDRCNEILGARLNTIHNLRYYQRIMASIRKALEEDRFEQFVEEFYARRDREVPPLKDL.

The active-site Proton acceptor is the Asp-89. Residues 89-93 (DSGGF), Asp-143, Gln-187, and Gly-214 contribute to the substrate site. The tract at residues 245–251 (GVGKPED) is RNA binding. Asp-264 serves as the catalytic Nucleophile. Residues 269–273 (TRNAR) form an RNA binding; important for wobble base 34 recognition region. Cys-302, Cys-304, Cys-307, and His-333 together coordinate Zn(2+).

It belongs to the queuine tRNA-ribosyltransferase family. Homodimer. Within each dimer, one monomer is responsible for RNA recognition and catalysis, while the other monomer binds to the replacement base PreQ1. Zn(2+) serves as cofactor.

It carries out the reaction 7-aminomethyl-7-carbaguanine + guanosine(34) in tRNA = 7-aminomethyl-7-carbaguanosine(34) in tRNA + guanine. Its pathway is tRNA modification; tRNA-queuosine biosynthesis. In terms of biological role, catalyzes the base-exchange of a guanine (G) residue with the queuine precursor 7-aminomethyl-7-deazaguanine (PreQ1) at position 34 (anticodon wobble position) in tRNAs with GU(N) anticodons (tRNA-Asp, -Asn, -His and -Tyr). Catalysis occurs through a double-displacement mechanism. The nucleophile active site attacks the C1' of nucleotide 34 to detach the guanine base from the RNA, forming a covalent enzyme-RNA intermediate. The proton acceptor active site deprotonates the incoming PreQ1, allowing a nucleophilic attack on the C1' of the ribose to form the product. After dissociation, two additional enzymatic reactions on the tRNA convert PreQ1 to queuine (Q), resulting in the hypermodified nucleoside queuosine (7-(((4,5-cis-dihydroxy-2-cyclopenten-1-yl)amino)methyl)-7-deazaguanosine). The protein is Queuine tRNA-ribosyltransferase of Aliivibrio salmonicida (strain LFI1238) (Vibrio salmonicida (strain LFI1238)).